The sequence spans 521 residues: Cholesterol side-chain cleavage enzyme, mitochondrial (521 aa).

The N-terminal 39 residues, 1–39, are a transit peptide targeting the mitochondrion; that stretch reads MLAKGLPPRSVLVKGCQTFLSAPREGLGRLRVPTGEGAG. Cys-462 provides a ligand contact to heme.

The protein belongs to the cytochrome P450 family. In terms of assembly, interacts with FDX1/adrenodoxin. Heme serves as cofactor.

The protein localises to the mitochondrion inner membrane. The enzyme catalyses 6 reduced [adrenodoxin] + cholesterol + 3 O2 + 6 H(+) = 4-methylpentanal + pregnenolone + 6 oxidized [adrenodoxin] + 4 H2O. It catalyses the reaction 2 reduced [adrenodoxin] + cholesterol + O2 + 2 H(+) = (22R)-hydroxycholesterol + 2 oxidized [adrenodoxin] + H2O. It carries out the reaction (22R)-hydroxycholesterol + 2 reduced [adrenodoxin] + O2 + 2 H(+) = (20R,22R)-20,22-dihydroxycholesterol + 2 oxidized [adrenodoxin] + H2O. The catalysed reaction is (20R,22R)-20,22-dihydroxycholesterol + 2 reduced [adrenodoxin] + O2 + 2 H(+) = 4-methylpentanal + pregnenolone + 2 oxidized [adrenodoxin] + 2 H2O. It functions in the pathway lipid metabolism; C21-steroid hormone metabolism. Its pathway is steroid metabolism; cholesterol metabolism. Functionally, a cytochrome P450 monooxygenase that catalyzes the side-chain hydroxylation and cleavage of cholesterol to pregnenolone, the precursor of most steroid hormones. Catalyzes three sequential oxidation reactions of cholesterol, namely the hydroxylation at C22 followed with the hydroxylation at C20 to yield 20R,22R-hydroxycholesterol that is further cleaved between C20 and C22 to yield the C21-steroid pregnenolone and 4-methylpentanal. Mechanistically, uses molecular oxygen inserting one oxygen atom into a substrate and reducing the second into a water molecule. Two electrons are provided by NADPH via a two-protein mitochondrial transfer system comprising flavoprotein FDXR (adrenodoxin/ferredoxin reductase) and nonheme iron-sulfur protein FDX1 or FDX2 (adrenodoxin/ferredoxin). The sequence is that of Cholesterol side-chain cleavage enzyme, mitochondrial from Homo sapiens (Human).